A 254-amino-acid chain; its full sequence is Methyltransferase-like protein 23 (254 aa).

The segment at M1–D27 is disordered. Residues R11–V21 are compositionally biased toward polar residues.

It belongs to the methyltransferase superfamily. METTL23 family.

Probable methyltransferase. This is Methyltransferase-like protein 23 from Dictyostelium discoideum (Social amoeba).